Here is a 501-residue protein sequence, read N- to C-terminus: Calcium-dependent protein kinase 4 (501 aa).

A Protein kinase domain is found at 25–283; that stretch reads YLLGKKLGQG…AHEALCHPWI (259 aa). Residues 31–39 and lysine 54 each bind ATP; that span reads LGQGQFGTT. The active-site Proton acceptor is aspartate 149. Phosphoserine is present on serine 189. Residues 289–319 are autoinhibitory domain; sequence APDKPLDPAVLSRLKQFSQMNKIKKMALRVI. 4 EF-hand domains span residues 326-361, 362-397, 398-433, and 437-467; these read EEIG…VGSE, LMES…INKM, EREE…FGLC, and LDDM…GDGV. Residues aspartate 339, aspartate 341, serine 343, threonine 345, glutamate 350, aspartate 375, aspartate 377, serine 379, threonine 381, glutamate 386, aspartate 411, aspartate 413, serine 415, tyrosine 417, glutamate 422, aspartate 445, aspartate 447, aspartate 449, lysine 451, and glutamate 456 each coordinate Ca(2+).

Belongs to the protein kinase superfamily. Ser/Thr protein kinase family. CDPK subfamily. As to quaternary structure, interacts with Di19.

The protein resides in the cytoplasm. It localises to the nucleus. The enzyme catalyses L-seryl-[protein] + ATP = O-phospho-L-seryl-[protein] + ADP + H(+). The catalysed reaction is L-threonyl-[protein] + ATP = O-phospho-L-threonyl-[protein] + ADP + H(+). With respect to regulation, activated by calcium. Autophosphorylation may play an important role in the regulation of the kinase activity. Its function is as follows. May play a role in signal transduction pathways that involve calcium as a second messenger. Functions as a regulator of the calcium-mediated abscisic acid (ABA) signaling pathway. Phosphorylates ABA-responsive transcription factors ABF1 and ABF4 in vitro. Phosphorylates the nuclear zinc finger Di19 in vitro. The chain is Calcium-dependent protein kinase 4 (CPK4) from Arabidopsis thaliana (Mouse-ear cress).